The following is a 159-amino-acid chain: Ribosomal RNA large subunit methyltransferase H (159 aa).

S-adenosyl-L-methionine is bound by residues Leu76, Gly108, and 127 to 132; that span reads FGRLTL.

Belongs to the RNA methyltransferase RlmH family. In terms of assembly, homodimer.

The protein localises to the cytoplasm. It catalyses the reaction pseudouridine(1915) in 23S rRNA + S-adenosyl-L-methionine = N(3)-methylpseudouridine(1915) in 23S rRNA + S-adenosyl-L-homocysteine + H(+). In terms of biological role, specifically methylates the pseudouridine at position 1915 (m3Psi1915) in 23S rRNA. This Listeria welshimeri serovar 6b (strain ATCC 35897 / DSM 20650 / CCUG 15529 / CIP 8149 / NCTC 11857 / SLCC 5334 / V8) protein is Ribosomal RNA large subunit methyltransferase H.